Consider the following 964-residue polypeptide: Integrator complex subunit 4 (964 aa).

An N6-acetyllysine modification is found at Lys27. 8 HEAT repeats span residues 67-106, 146-184, 191-229, 230-264, 278-314, 370-406, 407-445, and 447-485; these read AESVEGVVRILLEHYYKENDPSVRLKIASLLGLLSKTAGF, QATQVRLVDVACKHLTDTSHGVRNKCLQLLGNLGSLEKS, GSAARDVQKIIGDHFSDQDPRVRTAAIKAMLQLHERGLK, LHQTIYNQACKLLSDDYEQVRSAAVQLIWVVSQLY, IRLVDDAFGKICHMVSDGSWVVRVQAAKLLGSMEQVS, NLIESGACGAFVHGLEDEMYEVRIAAVEALCMLAQSS, PSFAEKCLDFLVDMFNDEIEEVRLQSIHTMRKISNNITL, and EDQLDTVLAVLEDSSRDIREALHELLCCTNVSTKEGIHL. Lys792 is covalently cross-linked (Glycyl lysine isopeptide (Lys-Gly) (interchain with G-Cter in SUMO1); alternate). Lys792 participates in a covalent cross-link: Glycyl lysine isopeptide (Lys-Gly) (interchain with G-Cter in SUMO2); alternate.

Belongs to the Integrator subunit 4 family. As to quaternary structure, component of the Integrator complex, composed of core subunits INTS1, INTS2, INTS3, INTS4, INTS5, INTS6, INTS7, INTS8, INTS9/RC74, INTS10, INTS11/CPSF3L, INTS12, INTS13, INTS14 and INTS15. The core complex associates with protein phosphatase 2A subunits PPP2CA and PPP2R1A, to form the Integrator-PP2A (INTAC) complex. INTS4 is part of the RNA endonuclease subcomplex, composed of INTS4, INTS9, INTS11 and inositol hexakisphosphate (InsP6). Interacts with BRAT1; interaction is required for the assembly of the RNA endonuclease subcomplex.

Its subcellular location is the nucleus. The protein resides in the cytoplasm. Its function is as follows. Component of the integrator complex, a multiprotein complex that terminates RNA polymerase II (Pol II) transcription in the promoter-proximal region of genes. The integrator complex provides a quality checkpoint during transcription elongation by driving premature transcription termination of transcripts that are unfavorably configured for transcriptional elongation: the complex terminates transcription by (1) catalyzing dephosphorylation of the C-terminal domain (CTD) of Pol II subunit POLR2A/RPB1 and SUPT5H/SPT5, (2) degrading the exiting nascent RNA transcript via endonuclease activity and (3) promoting the release of Pol II from bound DNA. The integrator complex is also involved in terminating the synthesis of non-coding Pol II transcripts, such as enhancer RNAs (eRNAs), small nuclear RNAs (snRNAs), telomerase RNAs and long non-coding RNAs (lncRNAs). Within the integrator complex, INTS4 acts as an scaffold that links INTS9 and INTS11. Mediates recruitment of cytoplasmic dynein to the nuclear envelope, probably as component of the integrator complex. This chain is Integrator complex subunit 4 (Ints4), found in Mus musculus (Mouse).